The following is a 65-amino-acid chain: Small ribosomal subunit protein bS21 (65 aa).

The segment covering 33 to 42 (RRREHYEKPS) has biased composition (basic and acidic residues). The tract at residues 33–65 (RRREHYEKPSVKRKRKEAARLRKLQKMAREANN) is disordered. Basic residues predominate over residues 43–58 (VKRKRKEAARLRKLQK).

The protein belongs to the bacterial ribosomal protein bS21 family.

This Herpetosiphon aurantiacus (strain ATCC 23779 / DSM 785 / 114-95) protein is Small ribosomal subunit protein bS21.